A 911-amino-acid polypeptide reads, in one-letter code: Chromatin assembly factor 1 subunit A (911 aa).

Residues 1-31 (MLEEPEAATRTAAAVDCKDRPGFPVKRLIQA) form a binds PCNA region. A disordered region spans residues 166-200 (HMEEEPGSPGDPKRTGDCQAGSLQSCPELTPGSRT). The interval 176 to 327 (DPKRTGDCQA…LHRDREQQRE (152 aa)) is binds CBX1 and CBX3 chromo shadow domains. Residues 186-200 (GSLQSCPELTPGSRT) are compositionally biased toward polar residues. Phosphoserine is present on residues Ser190 and Ser208. The PxVxL motif motif lies at 217–230 (FIEKVPVVVLEDIL). 2 disordered regions span residues 250 to 408 (SESE…EEEK) and 578 to 618 (DSDD…VPHG). Residues 265–281 (LSHSSTNSSSPTSSPEG) are compositionally biased toward low complexity. Ser293 bears the Phosphoserine mark. Residues 310–408 (STEKGRSKLH…EEKRLREEEK (99 aa)) show a composition bias toward basic and acidic residues. Acidic residues-rich tracts occupy residues 578-589 (DSDDEWEEEEPG) and 597-612 (GDED…EDDG). Positions 621–657 (SEDEGVTEECADPENHKVHQKLKAKEWDELLAKGKRF) are necessary for homodimerization and competence for chromatin assembly. Residues 639 to 911 (HQKLKAKEWD…APIPAPTLCK (273 aa)) form a binds to p60 region. Residue Ser776 is modified to Phosphoserine. Disordered regions lie at residues 819–843 (PSAP…MLLK) and 866–886 (GSGD…DDTD). Over residues 827–839 (GSASTEGPGQSTP) the composition is skewed to polar residues. Thr838 carries the phosphothreonine modification. Acidic residues predominate over residues 876–886 (DTEEDEEDDTD).

Belongs to the CHAF1A family. As to quaternary structure, homodimer. Part of the CAF-1 complex that contains RBBP4, CHAF1B and CHAF1A. CHAF1A binds directly to CHAF1B. Only minor amounts of RBBP4 are complexed with CHAF1A and CHAF1B in G1 phase. Interacts with PCNA; the interaction is direct. Interacts (via the PxVxL motif) with CBX5; the interaction is direct. Interacts with MBD1. Interacts with histones H3.1, H3.2 and H3.1t.

The protein localises to the nucleus. Functionally, acts as a component of the histone chaperone complex chromatin assembly factor 1 (CAF-1), which assembles histone octamers onto DNA during replication and repair. CAF-1 performs the first step of the nucleosome assembly process, bringing newly synthesized histones H3 and H4 to replicating DNA; histones H2A/H2B can bind to this chromatin precursor subsequent to DNA replication to complete the histone octamer. It may play a role in heterochromatin maintenance in proliferating cells by bringing newly synthesized cbx proteins to heterochromatic DNA replication foci. This Mus musculus (Mouse) protein is Chromatin assembly factor 1 subunit A.